Here is an 815-residue protein sequence, read N- to C-terminus: Phenylalanine--tRNA ligase beta subunit (815 aa).

The tRNA-binding domain maps to 39-148; that stretch reads SKELQKFEVA…KDAVVGDNFT (110 aa). A B5 domain is found at 421 to 496; the sequence is PQKKPLDFSV…RIYGYDKIES (76 aa). 4 residues coordinate Mg(2+): aspartate 474, aspartate 480, glutamate 483, and glutamate 484. An FDX-ACB domain is found at 721–814; it reads SDYQANFRDY…ISQKFQGILR (94 aa).

The protein belongs to the phenylalanyl-tRNA synthetase beta subunit family. Type 1 subfamily. In terms of assembly, tetramer of two alpha and two beta subunits. It depends on Mg(2+) as a cofactor.

The protein resides in the cytoplasm. The catalysed reaction is tRNA(Phe) + L-phenylalanine + ATP = L-phenylalanyl-tRNA(Phe) + AMP + diphosphate + H(+). This Rickettsia prowazekii (strain Madrid E) protein is Phenylalanine--tRNA ligase beta subunit (pheT).